The sequence spans 431 residues: uncharacterized protein (431 aa).

A run of 12 helical transmembrane segments spans residues 33 to 53, 63 to 83, 111 to 131, 143 to 163, 175 to 195, 197 to 217, 241 to 261, 273 to 293, 318 to 338, 358 to 378, 381 to 401, and 407 to 427; these read VARVGTAAAVTALCGYAVIYL, FSVFGVFWGAFGLVTGAANGL, VSGMVGLGSLVVIAGSSPLWS, VALLSIGLAGFCLHATLLGML, LMVADAVIRVVVAAATFVIGW, LVGFIWATVAGSVAWLIMLMT, AHSIIAAGASAILVMGFPVLL, GVVILAVTLTRAPLLVPLTAM, LIGGVGAVGMLAAGVVGPWIM, AAAVAIAMLTLTGAAAVAAAL, AYSLGWVGATVGSGLLLLLPL, and TVVALLCGPLVGIGVHLVALA.

This sequence to M.tuberculosis Rv1510 and M.bovis Mb3654.

The protein resides in the cell membrane. This is an uncharacterized protein from Mycobacterium tuberculosis (strain ATCC 25618 / H37Rv).